A 454-amino-acid chain; its full sequence is Enolase (454 aa).

Gln-167 provides a ligand contact to (2R)-2-phosphoglycerate. Residue Glu-209 is the Proton donor of the active site. 3 residues coordinate Mg(2+): Asp-250, Glu-312, and Asp-339. (2R)-2-phosphoglycerate-binding residues include Lys-364, Arg-393, Ser-394, and Lys-415. The Proton acceptor role is filled by Lys-364.

This sequence belongs to the enolase family. Mg(2+) serves as cofactor.

The protein resides in the cytoplasm. It localises to the secreted. It is found in the cell surface. It catalyses the reaction (2R)-2-phosphoglycerate = phosphoenolpyruvate + H2O. Its pathway is carbohydrate degradation; glycolysis; pyruvate from D-glyceraldehyde 3-phosphate: step 4/5. In terms of biological role, catalyzes the reversible conversion of 2-phosphoglycerate (2-PG) into phosphoenolpyruvate (PEP). It is essential for the degradation of carbohydrates via glycolysis. The polypeptide is Enolase (Mycoplasmopsis agalactiae (strain NCTC 10123 / CIP 59.7 / PG2) (Mycoplasma agalactiae)).